The primary structure comprises 335 residues: uncharacterized protein (335 aa).

Positions 1–21 (MDKKARAHTVIVCLVGALSLA) are cleaved as a signal peptide. C22 carries N-palmitoyl cysteine lipidation. C22 carries S-diacylglycerol cysteine lipidation.

It is found in the cell membrane. This is an uncharacterized protein from Treponema pallidum (strain Nichols).